An 883-amino-acid chain; its full sequence is Valine--tRNA ligase (883 aa).

The 'HIGH' region signature appears at 46–56 (PNVTGKLHLGH). The 'KMSKS' region signature appears at 520-524 (KMSKS). An ATP-binding site is contributed by Lys-523. Residues 809-844 (LVDLLNVEEELARLEKELAKWQKELDMVGKKLSNER) are a coiled coil.

This sequence belongs to the class-I aminoacyl-tRNA synthetase family. ValS type 1 subfamily. In terms of assembly, monomer.

Its subcellular location is the cytoplasm. The enzyme catalyses tRNA(Val) + L-valine + ATP = L-valyl-tRNA(Val) + AMP + diphosphate. Functionally, catalyzes the attachment of valine to tRNA(Val). As ValRS can inadvertently accommodate and process structurally similar amino acids such as threonine, to avoid such errors, it has a 'posttransfer' editing activity that hydrolyzes mischarged Thr-tRNA(Val) in a tRNA-dependent manner. This chain is Valine--tRNA ligase, found in Streptococcus pneumoniae (strain ATCC BAA-255 / R6).